The sequence spans 341 residues: Phenylalanine--tRNA ligase alpha subunit (341 aa).

A Mg(2+)-binding site is contributed by Glu254.

This sequence belongs to the class-II aminoacyl-tRNA synthetase family. Phe-tRNA synthetase alpha subunit type 1 subfamily. As to quaternary structure, tetramer of two alpha and two beta subunits. Mg(2+) is required as a cofactor.

Its subcellular location is the cytoplasm. It carries out the reaction tRNA(Phe) + L-phenylalanine + ATP = L-phenylalanyl-tRNA(Phe) + AMP + diphosphate + H(+). The protein is Phenylalanine--tRNA ligase alpha subunit of Chlorobium phaeobacteroides (strain DSM 266 / SMG 266 / 2430).